The chain runs to 390 residues: GTPase Obg (390 aa).

The region spanning 1 to 159 (MKFIDEALIR…RDLQLELMLL (159 aa)) is the Obg domain. Residues 160-333 (ADVGMLGLPN…LCRDIMDFIE (174 aa)) form the OBG-type G domain. GTP contacts are provided by residues 166 to 173 (GLPNAGKS), 191 to 195 (FTTLV), 213 to 216 (DIPG), 283 to 286 (NKID), and 314 to 316 (SAV). Mg(2+)-binding residues include Ser173 and Thr193. Residues 363 to 390 (DHQFEDEDEDWDDWSEEDEEGVETIYKP) are disordered. Over residues 366 to 384 (FEDEDEDWDDWSEEDEEGV) the composition is skewed to acidic residues.

It belongs to the TRAFAC class OBG-HflX-like GTPase superfamily. OBG GTPase family. Monomer. Mg(2+) serves as cofactor.

The protein localises to the cytoplasm. An essential GTPase which binds GTP, GDP and possibly (p)ppGpp with moderate affinity, with high nucleotide exchange rates and a fairly low GTP hydrolysis rate. Plays a role in control of the cell cycle, stress response, ribosome biogenesis and in those bacteria that undergo differentiation, in morphogenesis control. The chain is GTPase Obg from Pasteurella multocida (strain Pm70).